The following is a 533-amino-acid chain: Calcium-dependent protein kinase 12 (533 aa).

Residues 1–77 (MGNCFTKTYE…RASGGGGEMG (77 aa)) are disordered. Residue glycine 2 is the site of N-myristoyl glycine attachment. Residues 26–38 (ERSKARGGDEPGT) show a composition bias toward basic and acidic residues. Over residues 57–69 (GSSSAAGALSRRA) the composition is skewed to low complexity. Residues 91 to 349 (YQLDRKLGSG…ASQALEHRWL (259 aa)) form the Protein kinase domain. ATP contacts are provided by residues 97–105 (LGSGQFGTT) and lysine 120. Aspartate 215 acts as the Proton acceptor in catalysis. The tract at residues 354 to 384 (ASDRPIDSAVLSRMKQFKAMNKLKQLALKVI) is autoinhibitory domain. EF-hand domains follow at residues 391 to 426 (EEIK…LGSR), 427 to 462 (ISEA…KHKL), 463 to 498 (EKEE…YGMG), and 499 to 533 (DEAN…GIQT). Ca(2+)-binding residues include aspartate 404, aspartate 406, serine 408, threonine 410, glutamate 415, aspartate 440, aspartate 442, serine 444, serine 446, glutamate 451, aspartate 476, aspartate 478, serine 480, tyrosine 482, glutamate 487, aspartate 511, aspartate 513, aspartate 515, arginine 517, and glutamate 522.

This sequence belongs to the protein kinase superfamily. Ser/Thr protein kinase family. CDPK subfamily. As to expression, expressed in roots, leaf blades and developing seeds. Expressed in vascular tissues of roots and leaf blades. Expressed in the phloem tissue of the large vascular bundle in leaf blades.

Its subcellular location is the membrane. It carries out the reaction L-seryl-[protein] + ATP = O-phospho-L-seryl-[protein] + ADP + H(+). The catalysed reaction is L-threonyl-[protein] + ATP = O-phospho-L-threonyl-[protein] + ADP + H(+). With respect to regulation, activated by calcium. Autophosphorylation may play an important role in the regulation of the kinase activity. Functionally, may play a role in signal transduction pathways that involve calcium as a second messenger. Functions in signal transduction pathways that positively regulate responses to low-nitrogen. Functions in multiple signaling pathways, positively regulating salt tolerance and negatively modulating rice blast fungus resistance. May promote tolerance to salt stress by negatively regulating NADPH oxidase and positively regulating reactive oxygen species (ROS) scavengers. The polypeptide is Calcium-dependent protein kinase 12 (Oryza sativa subsp. japonica (Rice)).